The following is a 154-amino-acid chain: UPF0178 protein H16_B0290 (154 aa).

Belongs to the UPF0178 family.

This Cupriavidus necator (strain ATCC 17699 / DSM 428 / KCTC 22496 / NCIMB 10442 / H16 / Stanier 337) (Ralstonia eutropha) protein is UPF0178 protein H16_B0290.